Reading from the N-terminus, the 798-residue chain is Ubiquitin carboxyl-terminal hydrolase 10 (798 aa).

A2 is subject to N-acetylalanine. Positions 2–100 (ALHSPQYIFG…ILGCTASKIT (99 aa)) are interaction with p53/TP53. The interval 6 to 21 (PQYIFGDFSPDEFNQF) is G3BP1-binding. T24 bears the Phosphothreonine mark. T42 carries the post-translational modification Phosphothreonine; by ATM. T100 carries the post-translational modification Phosphothreonine. Disordered stretches follow at residues 139–166 (GVSG…LKDG), 194–257 (AEFM…CFPA), and 307–337 (TESI…LPVS). The segment covering 205 to 219 (TPRTCNSPQNSTDSV) has biased composition (polar residues). Phosphoserine is present on residues S211 and S226. The segment covering 307 to 316 (TESIDLDPTK) has biased composition (basic and acidic residues). S321 carries the phosphoserine modification. Residues 328–337 (GSASGTLPVS) show a composition bias toward polar residues. Phosphoserine; by ATM is present on S337. Residues S365 and S370 each carry the phosphoserine modification. The region spanning 415–795 (RGLINKGNWC…TAYLLYYRRV (381 aa)) is the USP domain. Residue C424 is the Nucleophile of the active site. Position 547 is a phosphoserine (S547). The span at 551–562 (EKLTISNGPKNH) shows a compositional bias: polar residues. Residues 551–594 (EKLTISNGPKNHSVNEEEQEEQGEGSEDEWEQVGPRNKTSVTRQ) form a disordered region. S563 and S576 each carry phosphoserine. Acidic residues predominate over residues 566-581 (EEEQEEQGEGSEDEWE). The active-site Proton acceptor is H749.

This sequence belongs to the peptidase C19 family. USP10 subfamily. As to quaternary structure, found in a deubiquitination complex with TANK, USP10 and ZC3H12A; this complex inhibits genotoxic stress- or interleukin-1-beta (IL1B)-mediated NF-kappa-B activation by promoting IKBKG or TRAF6 deubiquitination. Interacts with IKBKG; this interaction increases in response to DNA damage. Interacts with TANK; this interaction increases in response to DNA damage. Interacts with TRAF6; this interaction increases in response to DNA damage. Interacts with ZC3H12A; this interaction increases in response to DNA damage. Interacts with G3BP1 (via NTF2 domain) and G3BP2 (via NTF2 domain); inhibiting stress granule formation. Post-translationally, phosphorylated by ATM following DNA damage, leading to stabilization and translocation it to the nucleus. Ubiquitinated. Deubiquitinated by USP13. Widely expressed.

The protein localises to the cytoplasm. The protein resides in the nucleus. Its subcellular location is the early endosome. It carries out the reaction Thiol-dependent hydrolysis of ester, thioester, amide, peptide and isopeptide bonds formed by the C-terminal Gly of ubiquitin (a 76-residue protein attached to proteins as an intracellular targeting signal).. Its activity is regulated as follows. Specifically inhibited by spautin-1 (specific and potent autophagy inhibitor-1), a derivative of MBCQ that binds to USP10 and inhibits deubiquitinase activity. Regulated by PIK3C3/VPS34-containing complexes. Functionally, hydrolase that can remove conjugated ubiquitin from target proteins such as p53/TP53, RPS2/us5, RPS3/us3, RPS10/eS10, BECN1, SNX3 and CFTR. Acts as an essential regulator of p53/TP53 stability: in unstressed cells, specifically deubiquitinates p53/TP53 in the cytoplasm, leading to counteract MDM2 action and stabilize p53/TP53. Following DNA damage, translocates to the nucleus and deubiquitinates p53/TP53, leading to regulate the p53/TP53-dependent DNA damage response. Component of a regulatory loop that controls autophagy and p53/TP53 levels: mediates deubiquitination of BECN1, a key regulator of autophagy, leading to stabilize the PIK3C3/VPS34-containing complexes. In turn, PIK3C3/VPS34-containing complexes regulate USP10 stability, suggesting the existence of a regulatory system by which PIK3C3/VPS34-containing complexes regulate p53/TP53 protein levels via USP10 and USP13. Does not deubiquitinate MDM2. Plays a key role in 40S ribosome subunit recycling when a ribosome has stalled during translation: acts both by inhibiting formation of stress granules, which store stalled translation pre-initiation complexes, and mediating deubiquitination of 40S ribosome subunits. Acts as a negative regulator of stress granules formation by lowering G3BP1 and G3BP2 valence, thereby preventing G3BP1 and G3BP2 ability to undergo liquid-liquid phase separation (LLPS) and assembly of stress granules. Promotes 40S ribosome subunit recycling following ribosome dissociation in response to ribosome stalling by mediating deubiquitination of 40S ribosomal proteins RPS2/us5, RPS3/us3 and RPS10/eS10, thereby preventing their degradation by the proteasome. Part of a ribosome quality control that takes place when ribosomes have stalled during translation initiation (iRQC): USP10 acts by removing monoubiquitination of RPS2/us5 and RPS3/us3, promoting 40S ribosomal subunit recycling. Deubiquitinates CFTR in early endosomes, enhancing its endocytic recycling. Involved in a TANK-dependent negative feedback response to attenuate NF-kappa-B activation via deubiquitinating IKBKG or TRAF6 in response to interleukin-1-beta (IL1B) stimulation or upon DNA damage. Deubiquitinates TBX21 leading to its stabilization. Plays a negative role in the RLR signaling pathway upon RNA virus infection by blocking the RIGI-mediated MAVS activation. Mechanistically, removes the unanchored 'Lys-63'-linked polyubiquitin chains of MAVS to inhibit its aggregation, essential for its activation. In Homo sapiens (Human), this protein is Ubiquitin carboxyl-terminal hydrolase 10.